The primary structure comprises 92 residues: Small ribosomal subunit protein uS19 (92 aa).

Belongs to the universal ribosomal protein uS19 family.

In terms of biological role, protein S19 forms a complex with S13 that binds strongly to the 16S ribosomal RNA. In Corynebacterium efficiens (strain DSM 44549 / YS-314 / AJ 12310 / JCM 11189 / NBRC 100395), this protein is Small ribosomal subunit protein uS19.